Reading from the N-terminus, the 74-residue chain is UPF0435 protein GWCH70_0415 (74 aa).

Belongs to the UPF0435 family.

The sequence is that of UPF0435 protein GWCH70_0415 from Geobacillus sp. (strain WCH70).